A 403-amino-acid polypeptide reads, in one-letter code: S-adenosylmethionine synthase (403 aa).

His15 contacts ATP. Residue Asp17 participates in Mg(2+) binding. Glu43 contributes to the K(+) binding site. L-methionine is bound by residues Glu56 and Gln99. A flexible loop region spans residues 99–109; it reads QSPDINQGVDR. ATP is bound by residues 166 to 168, 232 to 233, Asp241, 247 to 248, Ala264, and Lys268; these read DAK, KF, and RK. L-methionine is bound at residue Asp241. Residue Lys272 participates in L-methionine binding.

It belongs to the AdoMet synthase family. As to quaternary structure, homotetramer; dimer of dimers. Mg(2+) is required as a cofactor. Requires K(+) as cofactor.

Its subcellular location is the cytoplasm. It carries out the reaction L-methionine + ATP + H2O = S-adenosyl-L-methionine + phosphate + diphosphate. It functions in the pathway amino-acid biosynthesis; S-adenosyl-L-methionine biosynthesis; S-adenosyl-L-methionine from L-methionine: step 1/1. Catalyzes the formation of S-adenosylmethionine (AdoMet) from methionine and ATP. The overall synthetic reaction is composed of two sequential steps, AdoMet formation and the subsequent tripolyphosphate hydrolysis which occurs prior to release of AdoMet from the enzyme. This is S-adenosylmethionine synthase from Xylella fastidiosa (strain M12).